The following is a 328-amino-acid chain: MAVFTTVSQDEIARWLLDYDLGEVRALRGIASGIENSNFFLTMEQDGVTREYVLTIFERLQFDQLPYYLHLMDHLARHGICVPAPMPARDGEILRELKGKPATIVTRLPGASQLAPQPDHCAEVGAMLARMHIAGQDYPRKQPNLRSLAWWQQTTPEITPFLDAAQRKLLTEEIAHQTAFFGSGDYAALQGGPCHCDLFRDNALFDTDSAGNHRLGGFFDFYFAGDDKWLFDLAVTVNDWCIDLATGTIDMERAQAMLRAYHAVRPLTAVEAAHWQDMLRAGALRFWVSRLWDFYLPREADMLQPHDPTHFERILRRRIDDAAALPWI.

This sequence belongs to the pseudomonas-type ThrB family.

The enzyme catalyses L-homoserine + ATP = O-phospho-L-homoserine + ADP + H(+). It participates in amino-acid biosynthesis; L-threonine biosynthesis; L-threonine from L-aspartate: step 4/5. The polypeptide is Homoserine kinase (Cupriavidus metallidurans (strain ATCC 43123 / DSM 2839 / NBRC 102507 / CH34) (Ralstonia metallidurans)).